The following is a 50-amino-acid chain: Small ribosomal subunit protein uS14 (50 aa).

Residues C15, C18, C33, and C36 each coordinate Zn(2+).

The protein belongs to the universal ribosomal protein uS14 family. Zinc-binding uS14 subfamily. In terms of assembly, part of the 30S ribosomal subunit. It depends on Zn(2+) as a cofactor.

In terms of biological role, binds 16S rRNA, required for the assembly of 30S particles. The protein is Small ribosomal subunit protein uS14 of Methanosarcina acetivorans (strain ATCC 35395 / DSM 2834 / JCM 12185 / C2A).